A 3601-amino-acid polypeptide reads, in one-letter code: Protein SPIRRIG (3601 aa).

Disordered stretches follow at residues 17–50, 398–426, 449–476, 638–657, 1954–1993, 2009–2049, and 2715–2747; these read AQSS…PSSS, SSNH…ADFS, PAEP…TSSV, QYSG…SFRK, HIND…SLGS, ENIL…DFQD, and TTHV…EKEL. Positions 32–50 are enriched in low complexity; that stretch reads PPSSSSSSSSPSFTYPSSS. Polar residues-rich tracts occupy residues 416-426 and 458-476; these read NTNSTENADFS and SRSS…TSSV. A compositionally biased stretch (polar residues) spans 1974–1991; it reads STKTSISVGSFPQGQVSL. The segment covering 2027–2048 has biased composition (basic and acidic residues); sequence EDVKKQDDHHVGPSASSERDFQ. Polar residues predominate over residues 2715–2731; that stretch reads TTHVKSETGSPRHSSSA. Residues 2732 to 2747 show a composition bias toward basic and acidic residues; sequence KMDETNGREEKSEKEL. The BEACH-type PH domain maps to 2760–2927; the sequence is EHLEKIRFRY…EREEVFKNLV (168 aa). The region spanning 2952-3244 is the BEACH domain; it reads GGRLFKLMAK…QLFPKAHVKR (293 aa). WD repeat units lie at residues 3328-3367, 3378-3417, 3464-3507, and 3540-3579; these read HESN…PRGS, AHTA…FVRQ, PSDS…DPVS, and FHKQ…LRAS.

Interacts with DCP1. Expressed in flowers, leaves, stems, hypocotyls and roots.

It is found in the cytoplasm. The protein localises to the P-body. Its function is as follows. Involved in cell morphogenesis. May have a function in membrane fusion or membrane composition. Required for salt stress tolerance. Regulates the salt stress-dependent post-transcriptional stabilization, cytoplasmic agglomeration, and localization to P-bodies of a subset of salt stress-regulated mRNAs. The polypeptide is Protein SPIRRIG (Arabidopsis thaliana (Mouse-ear cress)).